The sequence spans 146 residues: Ecotin-like protein 1 (146 aa).

Belongs to the protease inhibitor I11 (ecotin) family.

This chain is Ecotin-like protein 1 (ISP1), found in Leishmania infantum.